The primary structure comprises 250 residues: Small ribosomal subunit protein uS2 (250 aa).

It belongs to the universal ribosomal protein uS2 family.

This chain is Small ribosomal subunit protein uS2, found in Chloroherpeton thalassium (strain ATCC 35110 / GB-78).